The following is a 475-amino-acid chain: MSPQTETKASVGFKAGVKDYKLTYYTPDYETKDTDILAAFRVTPQPGVPPEEAGAAVAAESSTGTWTTVWTDGLTSLDRYKGRCYHIEPVAGEESQFIAYVAYPLDLFEEGSVTNMFTSIVGNVFGFKALRALRLEDLRIPPAYSKTFQGPPHGIQVERDKLNKYGRPLLGCTIKPKLGLSAKNYGRAVYECLRGGLDFTKDDENVNSQPFMRWRDRFLFCAEAIYKAQAETGEIKGHYLNATAGTCEEMIKRAVFARELGVPIVMHDYLTGGFTANTSLAHYCRDNGLLLHIHRAMHAVIDRQKNHGMHFRVLAKALRMSGGDHIHAGTVVGKLEGEREITLGFVDLLRDDYIEKDRSRGIYFTQDWVSLPGVLPVASGGIHVWHMPALTEIFGDDSVLQFGGGTLGHPWGNAPGAVANRVALEACVQARNEGRDLAREGNEIIRAAAKWSPELAAACEVWKEIKFEFPAMDTL.

Residues 1 to 2 (MS) constitute a propeptide that is removed on maturation. Position 3 is an N-acetylproline (proline 3). Lysine 14 is modified (N6,N6,N6-trimethyllysine). Substrate contacts are provided by asparagine 123 and threonine 173. The active-site Proton acceptor is the lysine 175. Lysine 177 contacts substrate. Residues lysine 201, aspartate 203, and glutamate 204 each contribute to the Mg(2+) site. An N6-carboxylysine modification is found at lysine 201. Histidine 294 serves as the catalytic Proton acceptor. Substrate contacts are provided by arginine 295, histidine 327, and serine 379.

Belongs to the RuBisCO large chain family. Type I subfamily. In terms of assembly, heterohexadecamer of 8 large chains and 8 small chains; disulfide-linked. The disulfide link is formed within the large subunit homodimers. Requires Mg(2+) as cofactor. The disulfide bond which can form in the large chain dimeric partners within the hexadecamer appears to be associated with oxidative stress and protein turnover.

The protein localises to the plastid. It is found in the chloroplast. It catalyses the reaction 2 (2R)-3-phosphoglycerate + 2 H(+) = D-ribulose 1,5-bisphosphate + CO2 + H2O. The catalysed reaction is D-ribulose 1,5-bisphosphate + O2 = 2-phosphoglycolate + (2R)-3-phosphoglycerate + 2 H(+). Functionally, ruBisCO catalyzes two reactions: the carboxylation of D-ribulose 1,5-bisphosphate, the primary event in carbon dioxide fixation, as well as the oxidative fragmentation of the pentose substrate in the photorespiration process. Both reactions occur simultaneously and in competition at the same active site. This Corylus cornuta (Beaked hazel) protein is Ribulose bisphosphate carboxylase large chain.